A 352-amino-acid chain; its full sequence is Mitochondrial adenine nucleotide transporter ADNT1 (352 aa).

Solcar repeat units lie at residues 36-123 (KSIC…ASNG), 139-227 (LTPL…LKDW), and 242-343 (LTVV…VKDV). 6 helical membrane passes run 41-61 (SLFA…PLER), 100-120 (GTNC…YEQA), 145-162 (LGAG…TYPM), 202-221 (GWLP…FSVY), 242-263 (LTVV…TIAY), and 324-340 (VKVV…YEMV).

Belongs to the mitochondrial carrier (TC 2.A.29) family. In terms of tissue distribution, expressed in seedling radicles and roots, vasculature of cotyledons, leaf primordia, leaves and sepals.

The protein localises to the mitochondrion inner membrane. Inhibited by pyridoxal 5-phosphate, bathophenanthroline, mersalyl, p-hydroxymercuribenzoate and tannic acid. Its function is as follows. Mitochondrial adenylate carrier that catalyzes specifically the transport of ATP, ADP and AMP by a counter-exchange mechanism across the inner mitochondrial membrane. Substrate preference in reconstituted proteoliposomes is ATP &gt; AMP &gt; ADP. May play a role in oxidative phosphorylation and be important for the provision of energy required to support growth in heterotrophic tissues. This chain is Mitochondrial adenine nucleotide transporter ADNT1 (ADNT1), found in Arabidopsis thaliana (Mouse-ear cress).